A 282-amino-acid polypeptide reads, in one-letter code: DegV domain-containing protein M6_Spy0690 (282 aa).

The region spanning 3–280 (LAVITDSTAT…EGAIAFGVTP (278 aa)) is the DegV domain. The hexadecanoate site is built by Thr61 and Ser94.

In terms of biological role, may bind long-chain fatty acids, such as palmitate, and may play a role in lipid transport or fatty acid metabolism. This is DegV domain-containing protein M6_Spy0690 from Streptococcus pyogenes serotype M6 (strain ATCC BAA-946 / MGAS10394).